Reading from the N-terminus, the 119-residue chain is Protein Wnt-4 (119 aa).

S1 carries the O-palmitoleoyl serine; by PORCN lipid modification. Cystine bridges form between C69-C100 and C85-C95. N86 is a glycosylation site (N-linked (GlcNAc...) asparagine).

Belongs to the Wnt family. Palmitoleoylation is required for efficient binding to frizzled receptors. Depalmitoleoylation leads to Wnt signaling pathway inhibition.

It localises to the secreted. It is found in the extracellular space. Its subcellular location is the extracellular matrix. Its function is as follows. Ligand for members of the frizzled family of seven transmembrane receptors. Plays an important role in embryonic development. This is Protein Wnt-4 (WNT-4) from Plestiodon skiltonianus (Western skink).